Here is a 429-residue protein sequence, read N- to C-terminus: Enolase (429 aa).

Residue Q164 coordinates (2R)-2-phosphoglycerate. The Proton donor role is filled by E206. The Mg(2+) site is built by D243, E286, and D313. The (2R)-2-phosphoglycerate site is built by K338, R367, S368, and K389. K338 serves as the catalytic Proton acceptor.

Belongs to the enolase family. It depends on Mg(2+) as a cofactor.

It localises to the cytoplasm. The protein localises to the secreted. It is found in the cell surface. It carries out the reaction (2R)-2-phosphoglycerate = phosphoenolpyruvate + H2O. Its pathway is carbohydrate degradation; glycolysis; pyruvate from D-glyceraldehyde 3-phosphate: step 4/5. In terms of biological role, catalyzes the reversible conversion of 2-phosphoglycerate (2-PG) into phosphoenolpyruvate (PEP). It is essential for the degradation of carbohydrates via glycolysis. The polypeptide is Enolase (Thermotoga sp. (strain RQ2)).